The following is a 338-amino-acid chain: Holliday junction branch migration complex subunit RuvB (338 aa).

A large ATPase domain (RuvB-L) region spans residues 1–182 (MDDRMVDQSQ…FGVHLRLEYY (182 aa)). ATP is bound by residues Leu-21, Arg-22, Gly-63, Lys-66, Thr-67, Thr-68, 129 to 131 (EDF), Arg-172, Tyr-182, and Arg-219. Thr-67 contacts Mg(2+). The small ATPAse domain (RuvB-S) stretch occupies residues 183-253 (KESELKDIII…TTKRALQLLQ (71 aa)). The head domain (RuvB-H) stretch occupies residues 256-338 (DYGLDYIDHK…KNGKRDNFEY (83 aa)). DNA is bound by residues Arg-292, Arg-311, and Arg-316.

The protein belongs to the RuvB family. As to quaternary structure, homohexamer. Forms an RuvA(8)-RuvB(12)-Holliday junction (HJ) complex. HJ DNA is sandwiched between 2 RuvA tetramers; dsDNA enters through RuvA and exits via RuvB. An RuvB hexamer assembles on each DNA strand where it exits the tetramer. Each RuvB hexamer is contacted by two RuvA subunits (via domain III) on 2 adjacent RuvB subunits; this complex drives branch migration. In the full resolvosome a probable DNA-RuvA(4)-RuvB(12)-RuvC(2) complex forms which resolves the HJ.

The protein resides in the cytoplasm. The catalysed reaction is ATP + H2O = ADP + phosphate + H(+). In terms of biological role, the RuvA-RuvB-RuvC complex processes Holliday junction (HJ) DNA during genetic recombination and DNA repair, while the RuvA-RuvB complex plays an important role in the rescue of blocked DNA replication forks via replication fork reversal (RFR). RuvA specifically binds to HJ cruciform DNA, conferring on it an open structure. The RuvB hexamer acts as an ATP-dependent pump, pulling dsDNA into and through the RuvAB complex. RuvB forms 2 homohexamers on either side of HJ DNA bound by 1 or 2 RuvA tetramers; 4 subunits per hexamer contact DNA at a time. Coordinated motions by a converter formed by DNA-disengaged RuvB subunits stimulates ATP hydrolysis and nucleotide exchange. Immobilization of the converter enables RuvB to convert the ATP-contained energy into a lever motion, pulling 2 nucleotides of DNA out of the RuvA tetramer per ATP hydrolyzed, thus driving DNA branch migration. The RuvB motors rotate together with the DNA substrate, which together with the progressing nucleotide cycle form the mechanistic basis for DNA recombination by continuous HJ branch migration. Branch migration allows RuvC to scan DNA until it finds its consensus sequence, where it cleaves and resolves cruciform DNA. This Staphylococcus carnosus (strain TM300) protein is Holliday junction branch migration complex subunit RuvB.